We begin with the raw amino-acid sequence, 155 residues long: RNA pyrophosphohydrolase (155 aa).

The region spanning 5 to 149 (EYRSGVGIML…KKPLYEKILS (145 aa)) is the Nudix hydrolase domain. The short motif at 39–60 (GGLEAKETPEVGVLRELEEETG) is the Nudix box element.

This sequence belongs to the Nudix hydrolase family. RppH subfamily. A divalent metal cation serves as cofactor.

Accelerates the degradation of transcripts by removing pyrophosphate from the 5'-end of triphosphorylated RNA, leading to a more labile monophosphorylated state that can stimulate subsequent ribonuclease cleavage. In Zymomonas mobilis subsp. mobilis (strain ATCC 31821 / ZM4 / CP4), this protein is RNA pyrophosphohydrolase.